Reading from the N-terminus, the 273-residue chain is Shikimate dehydrogenase (NADP(+)) (273 aa).

Residues 14-16 and T59 each bind shikimate; that span reads SLS. The active-site Proton acceptor is K63. Shikimate-binding residues include N84 and D99. Residues 122–126 and M212 contribute to the NADP(+) site; that span reads GAGGA. Y214 is a shikimate binding site. Position 235 (G235) interacts with NADP(+).

This sequence belongs to the shikimate dehydrogenase family. As to quaternary structure, homodimer.

The enzyme catalyses shikimate + NADP(+) = 3-dehydroshikimate + NADPH + H(+). It functions in the pathway metabolic intermediate biosynthesis; chorismate biosynthesis; chorismate from D-erythrose 4-phosphate and phosphoenolpyruvate: step 4/7. Its function is as follows. Involved in the biosynthesis of the chorismate, which leads to the biosynthesis of aromatic amino acids. Catalyzes the reversible NADPH linked reduction of 3-dehydroshikimate (DHSA) to yield shikimate (SA). This is Shikimate dehydrogenase (NADP(+)) from Aeropyrum pernix (strain ATCC 700893 / DSM 11879 / JCM 9820 / NBRC 100138 / K1).